A 750-amino-acid polypeptide reads, in one-letter code: NAD(P)H-quinone oxidoreductase subunit 5, chloroplastic (750 aa).

16 consecutive transmembrane segments (helical) span residues 9–29 (WIIP…LLLF), 40–60 (WAFT…NLSI), 89–109 (IDPL…MVLI), 125–145 (FAYM…SNLI), 147–167 (IYIF…FWFT), 185–205 (GDFG…SFEF), 230–250 (AALL…HIWL), 258–278 (TPIS…FLVA), 283–303 (LFIV…ITVL), 327–347 (LGYM…FHLI), 354–374 (ALLF…VGYS), 396–416 (TSFL…CFWS), 425–445 (WLYS…TAFY), 548–568 (LFPL…GIPF), 607–627 (IFSV…YKPI), and 724–744 (LFFY…FYLF).

This sequence belongs to the complex I subunit 5 family. In terms of assembly, NDH is composed of at least 16 different subunits, 5 of which are encoded in the nucleus.

The protein localises to the plastid. It localises to the chloroplast thylakoid membrane. It catalyses the reaction a plastoquinone + NADH + (n+1) H(+)(in) = a plastoquinol + NAD(+) + n H(+)(out). It carries out the reaction a plastoquinone + NADPH + (n+1) H(+)(in) = a plastoquinol + NADP(+) + n H(+)(out). NDH shuttles electrons from NAD(P)H:plastoquinone, via FMN and iron-sulfur (Fe-S) centers, to quinones in the photosynthetic chain and possibly in a chloroplast respiratory chain. The immediate electron acceptor for the enzyme in this species is believed to be plastoquinone. Couples the redox reaction to proton translocation, and thus conserves the redox energy in a proton gradient. This chain is NAD(P)H-quinone oxidoreductase subunit 5, chloroplastic (ndhF), found in Tecoma stans (Yellow bells).